The primary structure comprises 900 residues: MGFVRKEGARCREAFWTLNPEFSEPQDTPCVEYWFDKVKSVSGMSVGEAREAFLSFFEKHGHTRVPPRPVVARWREDLYLTIASIVVFQPHVTSGLVPPPANPLVISQPSIRLEDIDNVGITIGRHLTSFEMAAHHAFNYPDRQVYWKEETVRLAFEFFTQVLGIPPELIVFKESWWEGGGNAGPSFEVAVGGLELATLVFMKYRVVDGRYEEIPLKIVDTGYGVERLAWFTQKTPTAFHAIYGSLVDDFRRMLGVEKPDENVMWAAFRVAGFLDPEDPESLRNYYQTVASLAGGDVETVRSILTREARLYSVLDHTKTIALMLGDGIVPSNSGEGYLARLVVRRALRQLSLLNAEVPLVDLVERQARFWMRDFPQLKENLDYILDAVSLEEERFRDVLRKARSIVERELKRKKRLGVDDLIRLYDSMGVPPEIAAEIAASRGAPVEVPHNFYSLVAARHRGPEKIRGYGFDETGLPRDVEEWARRFGETRRVFHEDPYAKAWKARVLGVKGRYLVADSTIFYPTGGGQIHDTGVIRVNNQQYRIIDVQKVGDAIVHVAEREIAAEPGDEVWMEIDWERRYSIMRHHTVTHVLIAAARRVLGRHAWQAGAEKTEEKGRLDITHHRPLTRDDIEKLENVVNQVIRERRRVWEDMVDKNEAEEKYGFTIYQGGVPMEKRLRLVFVEDWDVEACFGTHVRNTGEIGGFKIISYSRIQDGVVRLEYVAGDRVAIYARELEERLARIGDAVKAPRGQEEARVKGLIASLEQAREDLKRYRDYWVKTIEEAYISRARRVNGVKVLAVESLEKDRRTVQEILRKLTSRHEDLIAALVVENEGNTQVEIAAGPKAAEKVDLGALVKIVIKKVGGRGGGRGSYASLRVEGRLSADKVEELLADALENVL.

Positions 587, 591, 691, and 695 each coordinate Zn(2+).

The protein belongs to the class-II aminoacyl-tRNA synthetase family. Requires Zn(2+) as cofactor.

Its subcellular location is the cytoplasm. It carries out the reaction tRNA(Ala) + L-alanine + ATP = L-alanyl-tRNA(Ala) + AMP + diphosphate. Catalyzes the attachment of alanine to tRNA(Ala) in a two-step reaction: alanine is first activated by ATP to form Ala-AMP and then transferred to the acceptor end of tRNA(Ala). Also edits incorrectly charged Ser-tRNA(Ala) and Gly-tRNA(Ala) via its editing domain. This chain is Alanine--tRNA ligase, found in Aeropyrum pernix (strain ATCC 700893 / DSM 11879 / JCM 9820 / NBRC 100138 / K1).